Reading from the N-terminus, the 154-residue chain is Endoribonuclease YbeY (154 aa).

Zn(2+) is bound by residues His-113, His-117, and His-123.

Belongs to the endoribonuclease YbeY family. Requires Zn(2+) as cofactor.

It localises to the cytoplasm. In terms of biological role, single strand-specific metallo-endoribonuclease involved in late-stage 70S ribosome quality control and in maturation of the 3' terminus of the 16S rRNA. This chain is Endoribonuclease YbeY, found in Vibrio vulnificus (strain YJ016).